The chain runs to 256 residues: Hydroxyacylglutathione hydrolase (256 aa).

Positions 57, 59, 61, 62, 115, 134, and 172 each coordinate Zn(2+).

This sequence belongs to the metallo-beta-lactamase superfamily. Glyoxalase II family. As to quaternary structure, monomer. Zn(2+) is required as a cofactor.

It catalyses the reaction an S-(2-hydroxyacyl)glutathione + H2O = a 2-hydroxy carboxylate + glutathione + H(+). The protein operates within secondary metabolite metabolism; methylglyoxal degradation; (R)-lactate from methylglyoxal: step 2/2. In terms of biological role, thiolesterase that catalyzes the hydrolysis of S-D-lactoyl-glutathione to form glutathione and D-lactic acid. This chain is Hydroxyacylglutathione hydrolase, found in Rhodospirillum rubrum (strain ATCC 11170 / ATH 1.1.1 / DSM 467 / LMG 4362 / NCIMB 8255 / S1).